The following is a 199-amino-acid chain: GTP-binding protein Di-Ras2 (199 aa).

GTP contacts are provided by residues 14-21 (GAGGVGKS), 33-39 (RESYIPT), 61-65 (DTTGS), and 121-124 (NKCD). Residue Ser35 is modified to Phosphoserine. Residues 36 to 44 (YIPTVEDTY) carry the Effector region motif. At Ser126 the chain carries Phosphoserine. 152–153 (AK) provides a ligand contact to GTP. Cys196 bears the Cysteine methyl ester mark. Cys196 is lipidated: S-geranylgeranyl cysteine. The propeptide at 197 to 199 (VIM) is removed in mature form.

It belongs to the small GTPase superfamily. Di-Ras family. In terms of processing, ubiquitinated by the ECS(ASB11) complex via 'Lys-11'-linked ubiquitin chains, leading to its degradation by the proteasome.

The protein resides in the cell membrane. It catalyses the reaction GTP + H2O = GDP + phosphate + H(+). Functionally, displays low GTPase activity and exists predominantly in the GTP-bound form. In Macaca fascicularis (Crab-eating macaque), this protein is GTP-binding protein Di-Ras2 (DIRAS2).